The following is a 292-amino-acid chain: MNPLWSMSAGSVRKRAEGEEKTLAGDVKTSPPRSAPKKQLPSIPKNALPIAKPTSPAPAAQSTNGTHASYGPFYLEYSLLAEFTLVVKQKLPGVYVQPSYRSALVWFGVIFIRHGLYQDGVFKFTVYIPDNYPDGDCPRLLFDIPVFHPLVDPTSGELDVKRAFAKWRRNHNHIWQVLMYARRVFYKIDTTSPLNPEAAVLYEKDIQLFKSKVVDSVKVCTARLFDQPKIEDPYAISFSPWNPSVHDEAREKMLTQKKPDEQHNKSVHVAGLSWVKPGSVQPFSKEEKTVAT.

The segment at 1–63 (MNPLWSMSAG…TSPAPAAQST (63 aa)) is disordered. The span at 14 to 23 (KRAEGEEKTL) shows a compositional bias: basic and acidic residues. At Ser30 the chain carries Phosphoserine. The region spanning 74–222 (YLEYSLLAEF…VVDSVKVCTA (149 aa)) is the UBC core domain.

This sequence belongs to the ubiquitin-conjugating enzyme family. FTS subfamily. In terms of assembly, component of the FTS/Hook/FHIP complex (FHF complex), composed of AKTIP/FTS, FHIP1B, and one or more members of the Hook family of proteins HOOK1, HOOK2, and HOOK3. Interacts directly with HOOK1, HOOK2 and HOOK3. The FHF complex associates with the homotypic vesicular sorting complex (the HOPS complex). Also interacts with AKT1. May interact with FHIP1A. Ubiquitous. Highest expression in kidney, testis and brain and lowest in spleen and liver.

The protein resides in the cytoplasm. The protein localises to the cell membrane. Component of the FTS/Hook/FHIP complex (FHF complex). The FHF complex may function to promote vesicle trafficking and/or fusion via the homotypic vesicular protein sorting complex (the HOPS complex). Regulates apoptosis by enhancing phosphorylation and activation of AKT1. Increases release of TNFSF6 via the AKT1/GSK3B/NFATC1 signaling cascade. FHF complex promotes the distribution of AP-4 complex to the perinuclear area of the cell. In Mus musculus (Mouse), this protein is AKT-interacting protein (Aktip).